The primary structure comprises 142 residues: MGNGKFAARKLKRDANNNRWHDTGYARRQLGLDVKADPLEGAPQGRGIVLEKVGVEAKQPNSAIRKCVRVQLIKNGRQVTAFAVGDGAINFIDEHDEVEIEGIGGRLGRSKGDIPGVRFVVTKVNNVSLREMVTGRKEKPRR.

It belongs to the universal ribosomal protein uS12 family. In terms of assembly, part of the 30S ribosomal subunit.

Functionally, with S4 and S5 plays an important role in translational accuracy. Located at the interface of the 30S and 50S subunits. This chain is Small ribosomal subunit protein uS12, found in Methanoculleus marisnigri (strain ATCC 35101 / DSM 1498 / JR1).